Consider the following 210-residue polypeptide: Large ribosomal subunit protein uL15 (210 aa).

2 disordered regions span residues 1–64 (MADD…AAPR) and 76–104 (AAGA…TKGT). A compositionally biased stretch (low complexity) spans 9-54 (EAAAKPVAEKATATALAKKAPAKAAAADKAAPAAKGETVAAKPAKA). Over residues 79–93 (AKKEKTRVGRGEGSK) the composition is skewed to basic and acidic residues.

Belongs to the universal ribosomal protein uL15 family. In terms of assembly, part of the 50S ribosomal subunit.

In terms of biological role, binds to the 23S rRNA. The protein is Large ribosomal subunit protein uL15 of Leifsonia xyli subsp. xyli (strain CTCB07).